Here is a 242-residue protein sequence, read N- to C-terminus: Purine nucleoside phosphorylase PA4543 (242 aa).

Zn(2+) contacts are provided by H69, C103, and H120.

The protein belongs to the purine nucleoside phosphorylase YfiH/LACC1 family. Homodimer. Cu(2+) serves as cofactor. The cofactor is Zn(2+).

The catalysed reaction is adenosine + phosphate = alpha-D-ribose 1-phosphate + adenine. It catalyses the reaction S-methyl-5'-thioadenosine + phosphate = 5-(methylsulfanyl)-alpha-D-ribose 1-phosphate + adenine. The enzyme catalyses inosine + phosphate = alpha-D-ribose 1-phosphate + hypoxanthine. It carries out the reaction adenosine + H2O + H(+) = inosine + NH4(+). Functionally, purine nucleoside enzyme that catalyzes the phosphorolysis of adenosine and inosine nucleosides, yielding D-ribose 1-phosphate and the respective free bases, adenine and hypoxanthine. Also catalyzes the phosphorolysis of S-methyl-5'-thioadenosine into adenine and S-methyl-5-thio-alpha-D-ribose 1-phosphate. Also has adenosine deaminase activity. This chain is Purine nucleoside phosphorylase PA4543, found in Pseudomonas aeruginosa (strain ATCC 15692 / DSM 22644 / CIP 104116 / JCM 14847 / LMG 12228 / 1C / PRS 101 / PAO1).